A 749-amino-acid chain; its full sequence is Catalase-peroxidase 2 (749 aa).

The first 27 residues, 1–27 (MFKRTIPLFAAFTLAISPSVFPNYAYA), serve as a signal peptide directing secretion. Residues 107 to 229 (WHAAGTYRIY…LAATVMGLIY (123 aa)) constitute a cross-link (tryptophyl-tyrosyl-methioninium (Trp-Tyr) (with M-255)). His-108 acts as the Proton acceptor in catalysis. A cross-link (tryptophyl-tyrosyl-methioninium (Tyr-Met) (with W-107)) is located at residues 229 to 255 (YVNPEGPNGVPDPLAAAEKIRETFGRM). Position 270 (His-270) interacts with heme b.

This sequence belongs to the peroxidase family. Peroxidase/catalase subfamily. Homodimer or homotetramer. It depends on heme b as a cofactor. Formation of the three residue Trp-Tyr-Met cross-link is important for the catalase, but not the peroxidase activity of the enzyme.

It catalyses the reaction H2O2 + AH2 = A + 2 H2O. The catalysed reaction is 2 H2O2 = O2 + 2 H2O. Bifunctional enzyme with both catalase and broad-spectrum peroxidase activity. This is Catalase-peroxidase 2 from Legionella pneumophila (strain Paris).